We begin with the raw amino-acid sequence, 326 residues long: Transposase InsH for insertion sequence element IS5Y (326 aa).

This sequence belongs to the transposase 11 family.

Involved in the transposition of the insertion sequence IS5. The protein is Transposase InsH for insertion sequence element IS5Y (insH5) of Escherichia coli (strain K12).